Here is a 247-residue protein sequence, read N- to C-terminus: ATP synthase subunit a (247 aa).

Helical transmembrane passes span 24 to 44 (IAFTNSSAYMLVAVVLTSLLM), 82 to 102 (FFPFVFTIFMLVTVSNLVGIV), 112 to 132 (IIVTAALAFLVFFTVLIYGFY), 141 to 161 (LFVPSGIPIVILPLVVAIEVI), 194 to 214 (MLGAMGIVGVFGAVLPLALVV), and 219 to 239 (LELLVAFLQAYVFTILTCIYI).

The protein belongs to the ATPase A chain family. In terms of assembly, F-type ATPases have 2 components, CF(1) - the catalytic core - and CF(0) - the membrane proton channel. CF(1) has five subunits: alpha(3), beta(3), gamma(1), delta(1), epsilon(1). CF(0) has three main subunits: a(1), b(2) and c(9-12). The alpha and beta chains form an alternating ring which encloses part of the gamma chain. CF(1) is attached to CF(0) by a central stalk formed by the gamma and epsilon chains, while a peripheral stalk is formed by the delta and b chains.

The protein resides in the cell inner membrane. Its function is as follows. Key component of the proton channel; it plays a direct role in the translocation of protons across the membrane. In Nitrobacter hamburgensis (strain DSM 10229 / NCIMB 13809 / X14), this protein is ATP synthase subunit a.